Here is a 473-residue protein sequence, read N- to C-terminus: Photosystem II CP43 reaction center protein (473 aa).

The propeptide occupies 1-14 (MKILYSLRRFYHVE). Thr-15 carries the post-translational modification N-acetylthreonine. Thr-15 carries the post-translational modification Phosphothreonine. The next 5 membrane-spanning stretches (helical) occupy residues 69–93 (LFEV…PHLA), 134–155 (LLGP…KDRN), 178–200 (KALY…RKIT), 255–275 (KPFA…LSYS), and 291–312 (WFNN…ASQA). Glu-367 provides a ligand contact to [CaMn4O5] cluster. A helical membrane pass occupies residues 447-471 (RARAAAAGFEKGIDRDLEPVLYMNP).

Belongs to the PsbB/PsbC family. PsbC subfamily. PSII is composed of 1 copy each of membrane proteins PsbA, PsbB, PsbC, PsbD, PsbE, PsbF, PsbH, PsbI, PsbJ, PsbK, PsbL, PsbM, PsbT, PsbX, PsbY, PsbZ, Psb30/Ycf12, at least 3 peripheral proteins of the oxygen-evolving complex and a large number of cofactors. It forms dimeric complexes. It depends on Binds multiple chlorophylls and provides some of the ligands for the Ca-4Mn-5O cluster of the oxygen-evolving complex. It may also provide a ligand for a Cl- that is required for oxygen evolution. PSII binds additional chlorophylls, carotenoids and specific lipids. as a cofactor.

It is found in the plastid. Its subcellular location is the chloroplast thylakoid membrane. In terms of biological role, one of the components of the core complex of photosystem II (PSII). It binds chlorophyll and helps catalyze the primary light-induced photochemical processes of PSII. PSII is a light-driven water:plastoquinone oxidoreductase, using light energy to abstract electrons from H(2)O, generating O(2) and a proton gradient subsequently used for ATP formation. The sequence is that of Photosystem II CP43 reaction center protein from Lolium perenne (Perennial ryegrass).